Here is a 339-residue protein sequence, read N- to C-terminus: UDP-N-acetylenolpyruvoylglucosamine reductase (339 aa).

Residues 18–189 (GVEVKAKWFA…LRVRFALNRV (172 aa)) enclose the FAD-binding PCMH-type domain. Arg166 is a catalytic residue. Ser239 (proton donor) is an active-site residue. The active site involves Glu335.

The protein belongs to the MurB family. FAD is required as a cofactor.

It is found in the cytoplasm. It catalyses the reaction UDP-N-acetyl-alpha-D-muramate + NADP(+) = UDP-N-acetyl-3-O-(1-carboxyvinyl)-alpha-D-glucosamine + NADPH + H(+). The protein operates within cell wall biogenesis; peptidoglycan biosynthesis. Functionally, cell wall formation. The sequence is that of UDP-N-acetylenolpyruvoylglucosamine reductase from Pseudomonas fluorescens (strain ATCC BAA-477 / NRRL B-23932 / Pf-5).